We begin with the raw amino-acid sequence, 160 residues long: Phosphopantetheine adenylyltransferase (160 aa).

T10 contacts substrate. ATP is bound by residues T10–F11 and H18. 3 residues coordinate substrate: K42, L74, and R88. Residues G89–R91, E99, and N124–T130 each bind ATP.

This sequence belongs to the bacterial CoaD family. In terms of assembly, homohexamer. Mg(2+) serves as cofactor.

Its subcellular location is the cytoplasm. The catalysed reaction is (R)-4'-phosphopantetheine + ATP + H(+) = 3'-dephospho-CoA + diphosphate. The protein operates within cofactor biosynthesis; coenzyme A biosynthesis; CoA from (R)-pantothenate: step 4/5. In terms of biological role, reversibly transfers an adenylyl group from ATP to 4'-phosphopantetheine, yielding dephospho-CoA (dPCoA) and pyrophosphate. The polypeptide is Phosphopantetheine adenylyltransferase (Aeromonas hydrophila subsp. hydrophila (strain ATCC 7966 / DSM 30187 / BCRC 13018 / CCUG 14551 / JCM 1027 / KCTC 2358 / NCIMB 9240 / NCTC 8049)).